Consider the following 1178-residue polypeptide: Ubiquitin carboxyl-terminal hydrolase cyk-3 (1178 aa).

EF-hand domains are found at residues 28–60, 175–210, and 211–246; these read EEYRRIRQAFQRFKNGCINYDEFCYHVLGGAQI, FPDSYAERLFAVFDENRDGQIDFRELVCTLSALCRG, and PLPGRISQLARIWDVDCDKLLSDEELSNMYKDLNVP. Ca(2+) is bound by residues Asp-188, Asn-190, Asp-192, Gln-194, Glu-199, Asp-224, Asp-226, Asp-228, and Glu-235. The 115-residue stretch at 296–410 folds into the DUSP domain; it reads ESRKMELQIV…VDSQFTRKYL (115 aa). Residues 570-1175 enclose the USP domain; that stretch reads VGLVNYGNFC…GAYLLFYERK (606 aa). The Nucleophile role is filled by Cys-579. Residues 681-725 form a disordered region; the sequence is SNKSLHPSPEESEGTDSNKLSDSSKKKEADKEEADEEKAERSWTE. The active-site Proton acceptor is His-1134.

It belongs to the peptidase C19 family. Expressed in excretory cells, coelomocytes, head neurons, hypodermal cells, germ cells, oocytes, sperm and pharynx (at protein level).

It localises to the nucleus. It is found in the cytoplasm. The protein localises to the cytoskeleton. The protein resides in the microtubule organizing center. The enzyme catalyses Thiol-dependent hydrolysis of ester, thioester, amide, peptide and isopeptide bonds formed by the C-terminal Gly of ubiquitin (a 76-residue protein attached to proteins as an intracellular targeting signal).. Ubiquitin-protein hydrolase which cleaves ubiquitin from ubiquitinated proteins. Plays a role in embryo osmoregulation. Probably by regulating osmosis, controls actin redistribution in the 1-cell embryos and thus actin-dependent processes such as cytokinesis and P-granules segregation. During the first embryonic mitotic division, involved in the formation of a functional microtubule organizing center provided by the male pronucleus. Acts as a positive regulator of the mTORC1 signaling. This Caenorhabditis elegans protein is Ubiquitin carboxyl-terminal hydrolase cyk-3.